Consider the following 443-residue polypeptide: Regulator of sigma E protease (443 aa).

Residue histidine 21 participates in Zn(2+) binding. Residue glutamate 22 is part of the active site. Residue histidine 25 coordinates Zn(2+). Residues 98–118 traverse the membrane as a helical segment; that stretch reads FVIIAGPLANFIFAIFAYWVI. 2 consecutive PDZ domains span residues 106–185 and 198–287; these read ANFI…SPFN and NWTF…TPVR. 2 helical membrane passes run 369–389 and 423–443; these read LVYF…MNLF and IGAA…FLRL.

It belongs to the peptidase M50B family. In terms of assembly, interacts with RseA. The cofactor is Zn(2+).

The protein resides in the cell inner membrane. In terms of biological role, a site-2 regulated intramembrane protease (S2P) that cleaves a peptide bond in the transmembrane region of RseA. Part of a regulated intramembrane proteolysis (RIP) cascade. Acts on DegS-cleaved RseA to release the cytoplasmic domain of RseA. This provides the cell with sigma-E (RpoE) activity through the proteolysis of RseA. This Haemophilus influenzae (strain ATCC 51907 / DSM 11121 / KW20 / Rd) protein is Regulator of sigma E protease (rsep).